A 37-amino-acid chain; its full sequence is Large ribosomal subunit protein bL36 (37 aa).

Belongs to the bacterial ribosomal protein bL36 family.

This is Large ribosomal subunit protein bL36 from Nocardioides sp. (strain ATCC BAA-499 / JS614).